Consider the following 269-residue polypeptide: 5'-nucleotidase SurE (269 aa).

Residues aspartate 8, aspartate 9, serine 40, and asparagine 93 each contribute to the a divalent metal cation site.

It belongs to the SurE nucleotidase family. The cofactor is a divalent metal cation.

It is found in the cytoplasm. It carries out the reaction a ribonucleoside 5'-phosphate + H2O = a ribonucleoside + phosphate. Its function is as follows. Nucleotidase that shows phosphatase activity on nucleoside 5'-monophosphates. This Caulobacter sp. (strain K31) protein is 5'-nucleotidase SurE.